A 291-amino-acid chain; its full sequence is Protease HtpX homolog (291 aa).

2 consecutive transmembrane segments (helical) span residues 11 to 31 (INTF…GLLA) and 34 to 54 (FLGM…ACVQ). His140 contacts Zn(2+). Residue Glu141 is part of the active site. His144 provides a ligand contact to Zn(2+). 2 consecutive transmembrane segments (helical) span residues 155-175 (IVFG…RALI) and 186-206 (AFSF…AMLV). Glu215 is a binding site for Zn(2+).

It belongs to the peptidase M48B family. The cofactor is Zn(2+).

Its subcellular location is the cell membrane. This Tropheryma whipplei (strain TW08/27) (Whipple's bacillus) protein is Protease HtpX homolog.